The sequence spans 187 residues: MVMHSEDEPYKCKFCGKAFDNLHLYLTHERTHTGEKPYECNKCGKAFSCSSSIRKHARIHTGEKPYICKQCGKAFRYSSSIRNHENTHTGEKPCECKQCGKAFSYSSYFRIHERIHTGEQVYKCKECGKTFTYPSAFHKHKSTHTSQKLYECKECGKAFDCFSSFHSHEGVHTGEKPYECRTWKSLQ.

6 C2H2-type zinc fingers span residues 10 to 32 (YKCK…ERTH), 38 to 60 (YECN…ARIH), 66 to 88 (YICK…ENTH), 94 to 116 (CECK…ERIH), 122 to 144 (YKCK…KSTH), and 150 to 172 (YECK…EGVH).

This Homo sapiens (Human) protein is Putative zinc finger protein 833 (ZNF833P).